A 348-amino-acid chain; its full sequence is WD repeat-containing protein JIP5 (348 aa).

WD repeat units follow at residues 5–44, 51–90, 94–132, 135–174, 179–218, 223–261, and 264–304; these read KLKN…GETS, PSKR…MTRE, AHEC…SIRT, QHFD…STPL, DQED…ADSV, GHPA…FLGV, and THEE…EDSD. Over residues 299–318 the composition is skewed to acidic residues; sequence LFEDSDEDDEMEEDEPDSDE. The tract at residues 299–348 is disordered; that stretch reads LFEDSDEDDEMEEDEPDSDEEKSKKKKKDNGMKDMSRGQAENDGSFFADL.

Belongs to the WD repeat WDR55 family.

It localises to the nucleus. Its subcellular location is the nucleolus. This is WD repeat-containing protein JIP5 (JIP5) from Cryptococcus neoformans var. neoformans serotype D (strain JEC21 / ATCC MYA-565) (Filobasidiella neoformans).